The following is a 510-amino-acid chain: ATP synthase subunit alpha (510 aa).

169–176 (GDRQTGKT) is a binding site for ATP.

The protein belongs to the ATPase alpha/beta chains family. In terms of assembly, F-type ATPases have 2 components, CF(1) - the catalytic core - and CF(0) - the membrane proton channel. CF(1) has five subunits: alpha(3), beta(3), gamma(1), delta(1), epsilon(1). CF(0) has three main subunits: a(1), b(2) and c(9-12). The alpha and beta chains form an alternating ring which encloses part of the gamma chain. CF(1) is attached to CF(0) by a central stalk formed by the gamma and epsilon chains, while a peripheral stalk is formed by the delta and b chains.

The protein localises to the cell inner membrane. The catalysed reaction is ATP + H2O + 4 H(+)(in) = ADP + phosphate + 5 H(+)(out). Functionally, produces ATP from ADP in the presence of a proton gradient across the membrane. The alpha chain is a regulatory subunit. In Azorhizobium caulinodans (strain ATCC 43989 / DSM 5975 / JCM 20966 / LMG 6465 / NBRC 14845 / NCIMB 13405 / ORS 571), this protein is ATP synthase subunit alpha.